Here is a 240-residue protein sequence, read N- to C-terminus: 1-(5-phosphoribosyl)-5-[(5-phosphoribosylamino)methylideneamino] imidazole-4-carboxamide isomerase (240 aa).

The active-site Proton acceptor is the Asp-8. Residue Asp-129 is the Proton donor of the active site.

This sequence belongs to the HisA/HisF family.

It localises to the cytoplasm. It carries out the reaction 1-(5-phospho-beta-D-ribosyl)-5-[(5-phospho-beta-D-ribosylamino)methylideneamino]imidazole-4-carboxamide = 5-[(5-phospho-1-deoxy-D-ribulos-1-ylimino)methylamino]-1-(5-phospho-beta-D-ribosyl)imidazole-4-carboxamide. The protein operates within amino-acid biosynthesis; L-histidine biosynthesis; L-histidine from 5-phospho-alpha-D-ribose 1-diphosphate: step 4/9. This Clostridium beijerinckii (strain ATCC 51743 / NCIMB 8052) (Clostridium acetobutylicum) protein is 1-(5-phosphoribosyl)-5-[(5-phosphoribosylamino)methylideneamino] imidazole-4-carboxamide isomerase.